Reading from the N-terminus, the 299-residue chain is Epimerase family protein SH2119 (299 aa).

It belongs to the NAD(P)-dependent epimerase/dehydratase family. SDR39U1 subfamily.

This chain is Epimerase family protein SH2119, found in Staphylococcus haemolyticus (strain JCSC1435).